The following is a 418-amino-acid chain: Chromo domain-containing protein rhino (418 aa).

One can recognise a Chromo domain in the interval 24–74; it reads YVVEKILGKRFVNGRPQVLVKWSGFPNENNTWEPLENVGNCMKLVSDFESE. Composition is skewed to low complexity over residues 84–99 and 107–120; these read AKSVGKSKSSPSSSGP and SSSKKTQQHSKSVQ. Disordered stretches follow at residues 84–167 and 199–337; these read AKSV…TDST and PTKD…RCPR. The segment covering 131 to 143 has biased composition (basic residues); that stretch reads NQKKGKNIKKTAG. Over residues 152–167 the composition is skewed to polar residues; sequence PKTQMPSTSQVSTDST. The span at 218 to 228 shows a compositional bias: basic and acidic residues; that stretch reads RLIEFPQREDA. Over residues 258–275 the composition is skewed to low complexity; sequence GESSSSMSLPTVSSTSSE. Residues 276-285 are compositionally biased toward basic and acidic residues; that stretch reads KSIKVTKSEP. Residues 353-418 form a required for interaction with del/deadlock region; the sequence is TKPFGVNRGL…FESLRIIVPK (66 aa).

Homodimer in solution. Dimerization is essential for chromatin binding. Component of the Rhino-Deadlock-Cutoff (RDC) complex, composed of rhi/rhino, del/deadlock and cuff/cutoff. Interacts (via C-terminus) with del/deadlock (via N-terminus); this interaction is direct. Two copies of del/deadlock associate with each rhi/rhino dimer. Interacts with cuff/cutoff; this interaction is indirect and is mediated by del/deadlock. Interacts (via Chromo domain) with kipf/kipferl (via C2H2 type zinc finger 4). Interacts (via Chromo domain) with His3/histone H3 (via N-terminus di- or tri-methylated on 'Lys-10' (H3K9me2/3)); this interaction is direct. Two His3 N-terminal tails oriented anti-parallel to each other are required for dimer binding to His3. In terms of tissue distribution, female specific, expressed in both somatic and germline cells but highly enriched in ovaries. In the germarium of the developing oocyte expressed in germline stem cells, cystoblasts and developing germline cysts. Expressed in nurse cells in the germarium and egg chamber.

It localises to the nucleus. It is found in the chromosome. Functionally, involved in piRNA (piwi-interacting RNA)-mediated transposon repression. May be involved in formation of the perinuclear nuage, a subcellular structure implicated in RNA processing that may be involved in transposon RNA surveillance and silencing. Required for ping-pong amplification during piRNA biogenesis, probably by promoting transcription of piRNA precursors. As part of the Rhino-Deadlock-Cutoff (RDC) Complex associates with, and drives non-canonical transcription of germline specific dual-strand piRNA clusters 80F, 38C and 42AB, but not single-stranded piRNA cluster 20A. Induction of piRNA expression is potentially achieved through a mechanism that prevents transcriptional termination and leads to readthrough from flanking transcription units. Recruited to specific chromatin regions by a combination of H3K9me2/3 histone methylation and differentially expressed sequence-specific recruitment factors. This association may involve direct interaction with DNA. Associates with chromatin upon exposure to homologous piRNA and facilitates transcriptional read-through. As part of the RDC complex, involved in suppression of splicing. In ovaries, recruitment to specific heterochromatin clusters is nucleated and stabilized by kipf/kipferl. During oogenesis, involved in axis specification and may regulate chromosome condensation at the onset of a mitotic-like phase that occurs during nurse cell chromosome duplication. Involved in the distribution of mRNAs for proteins that play a role in anterior-posterior and dorsal-ventral axes specification during development of the oocyte, including grk/gurken, osk/oskar and vas/vasa. Mitigates meiotic double strand breaks and interacts with DNA damage signaling to mediate axis specification. In Drosophila melanogaster (Fruit fly), this protein is Chromo domain-containing protein rhino.